Consider the following 283-residue polypeptide: ATP phosphoribosyltransferase (283 aa).

The protein belongs to the ATP phosphoribosyltransferase family. Long subfamily. The cofactor is Mg(2+).

The protein resides in the cytoplasm. It carries out the reaction 1-(5-phospho-beta-D-ribosyl)-ATP + diphosphate = 5-phospho-alpha-D-ribose 1-diphosphate + ATP. It participates in amino-acid biosynthesis; L-histidine biosynthesis; L-histidine from 5-phospho-alpha-D-ribose 1-diphosphate: step 1/9. Feedback inhibited by histidine. Functionally, catalyzes the condensation of ATP and 5-phosphoribose 1-diphosphate to form N'-(5'-phosphoribosyl)-ATP (PR-ATP). Has a crucial role in the pathway because the rate of histidine biosynthesis seems to be controlled primarily by regulation of HisG enzymatic activity. The polypeptide is ATP phosphoribosyltransferase (Rhodococcus opacus (strain B4)).